The following is a 204-amino-acid chain: Wound-induced proteinase inhibitor 2 (204 aa).

A signal peptide spans 1–25 (MAVPKEVSFLASLLVLGILLLHVDA). 3 tandem repeats follow at residues 25–67 (AKAC…DPNN), 68–125 (PKPC…DPNN), and 126–183 (PKPC…DPNH). Cystine bridges form between C28-C100, C38-C75, C41-C59, C42-C71, C48-C84, and C99-C117. Residues 184–204 (PKACPKNCDPNIAYSLCLYEK) form a 4; truncated repeat.

This sequence belongs to the protease inhibitor I20 (potato type II proteinase inhibitor) family.

The protein is Wound-induced proteinase inhibitor 2 (PIN2) of Capsicum annuum (Capsicum pepper).